Consider the following 147-residue polypeptide: Hemoglobin subunit beta-2 (147 aa).

At V2 the chain carries N-acetylvaline. The Globin domain maps to 3–147; that stretch reads HLTDAEKSAV…VATALAHKYH (145 aa). K18 is modified (N6-succinyllysine). The residue at position 42 (Y42) is a Phosphotyrosine. Phosphoserine occurs at positions 45, 51, and 53. The residue at position 60 (K60) is an N6-succinyllysine. Heme b contacts are provided by H64 and H93. Position 105 is an asymmetric dimethylarginine (R105). Residue T124 is modified to Phosphothreonine.

Belongs to the globin family. As to quaternary structure, heterotetramer of two alpha chains and two beta chains. As to expression, red blood cells.

Functionally, involved in oxygen transport from the lung to the various peripheral tissues. The polypeptide is Hemoglobin subunit beta-2 (Hbb-b2) (Mus musculus (Mouse)).